Consider the following 260-residue polypeptide: Small ribosomal subunit protein uS2 (260 aa).

Belongs to the universal ribosomal protein uS2 family.

This chain is Small ribosomal subunit protein uS2, found in Mesorhizobium japonicum (strain LMG 29417 / CECT 9101 / MAFF 303099) (Mesorhizobium loti (strain MAFF 303099)).